Reading from the N-terminus, the 3004-residue chain is Guanylate cyclase beta (3004 aa).

The Cytoplasmic segment spans residues 1-66 (MKETDKIKSE…FSLYNFIRRL (66 aa)). A helical transmembrane segment spans residues 67 to 87 (ISLDAVIVYTLFMTVYIFSEI). At 88–94 (SQGITKK) the chain is on the extracellular side. Residues 95–115 (YLFVDTAISLFLNIGILVVIE) form a helical membrane-spanning segment. Over 116–300 (SLFELKLLKD…TFCIKMNNVV (185 aa)) the chain is Cytoplasmic. A helical transmembrane segment spans residues 301–321 (YYLIFMYILFVLLSIIIKAIF). Residues 322–334 (YRKGKLLENSNDT) are Extracellular-facing. Residue asparagine 332 is glycosylated (N-linked (GlcNAc...) asparagine). Residues 335–355 (FFTVLEDFIGLYILVLPVMLY) traverse the membrane as a helical segment. Over 356 to 991 (SEKSLIYIIQ…GRLNRFSLCR (636 aa)) the chain is Cytoplasmic. A helical membrane pass occupies residues 992-1012 (AFLWIIYLKVMIGSFYFFHNF). The Extracellular portion of the chain corresponds to 1013–1022 (DNFFSGSSIS). The chain crosses the membrane as a helical span at residues 1023–1043 (SILYSQTAFAIFHYSLIVAFA). The Cytoplasmic segment spans residues 1044–1072 (SYEIDIPYKFIRNFPYIYQLARRKYFLNN). Residues 1073-1093 (TIIFLNIVESIFSSFISYYIL) form a helical membrane-spanning segment. The Extracellular portion of the chain corresponds to 1094-1105 (RGNLFNLITHRK). A helical transmembrane segment spans residues 1106-1126 (FTFHIFVLNFFLISEKILLFS). The Cytoplasmic portion of the chain corresponds to 1127 to 1130 (KTWH). Residues 1131–1151 (IFFFIMTIIIVSILFIYINIY) form a helical membrane-spanning segment. At 1152–1171 (TLVDCLITGKCEFSLFDPED) the chain is on the extracellular side. Residues 1172-1192 (SYFWISLLPILYINFIIDKFM) traverse the membrane as a helical segment. Topologically, residues 1193 to 1297 (KFVKNKIYPD…YEKRNKLKLR (105 aa)) are cytoplasmic. A helical membrane pass occupies residues 1298-1318 (IIILLLFIIFLITFTIQIIIS). Residues 1319 to 1327 (KFIEKKLHS) lie on the Extracellular side of the membrane. The helical transmembrane segment at 1328-1348 (LSYLTVIYYIVAVLYLIKILI) threads the bilayer. At 1349 to 1353 (RNKTN) the chain is on the cytoplasmic side. The chain crosses the membrane as a helical span at residues 1354–1374 (YTYFYIIGKLLLVIGYLLEIS). Topologically, residues 1375 to 1394 (ENSVNNIINMLVTYSFTVCY) are extracellular. The helical transmembrane segment at 1395-1415 (IFFISFKILEGLVMCIIILSI) threads the bilayer. Residues 1416–1457 (AIWVYYHKNNNLNAMCTDFCDNPYTSLDNLEYINISCICKQQ) are Cytoplasmic-facing. Residues 1458–1478 (IFTFLICTLSFTLICLFMKYY) form a helical membrane-spanning segment. Residues 1479–1500 (EIYYLKKKFLTRYKQKVNLGKQ) lie on the Extracellular side of the membrane. A helical membrane pass occupies residues 1501–1521 (IEILHTMLPSFLVEYLLVSDP). The Cytoplasmic portion of the chain corresponds to 1522–2563 (KADGIMVGKN…EIINIDLTKK (1042 aa)). The region spanning 1541 to 1696 (SVIFCDIDDF…DTVNTASRMK (156 aa)) is the Guanylate cyclase 1 domain. Positions 2463–2476 (TMSNSKSGQTNITT) are enriched in polar residues. Positions 2463 to 2491 (TMSNSKSGQTNITTDNKKSQIKKNGDVNK) are disordered. Residues 2477-2488 (DNKKSQIKKNGD) show a composition bias toward basic and acidic residues. A helical membrane pass occupies residues 2564-2584 (LIIIFVISELILSLCNVIELS). The Extracellular segment spans residues 2585-2594 (YYENKETPND). The helical transmembrane segment at 2595-2615 (FIVIIWLIRSIYLFTITFIWL) threads the bilayer. The Cytoplasmic portion of the chain corresponds to 2616 to 2634 (LLKTKLKEYKDNSSKMMWT). A helical membrane pass occupies residues 2635–2655 (TFILNIFLSSWGIIMIDLACI). The Extracellular segment spans residues 2656–2667 (HYSNLVGNSRER). The helical transmembrane segment at 2668–2688 (SIFFMKDATELIISMQLIFVK) threads the bilayer. Over 2689-2695 (NMLFKHK) the chain is Cytoplasmic. Residues 2696-2716 (FFFFVFFFVFLMYSFFKLFVI) traverse the membrane as a helical segment. Residues 2717–2722 (HVCELR) lie on the Extracellular side of the membrane. A helical transmembrane segment spans residues 2723–2743 (ICCSILLILSINILYFWYSEY). The Cytoplasmic portion of the chain corresponds to 2744 to 3004 (LDRTQYIIKR…KLREQNKVKG (261 aa)). The region spanning 2793–2927 (AFLFADIVGF…LDVLIANHIE (135 aa)) is the Guanylate cyclase 2 domain. 3 residues coordinate Mg(2+): aspartate 2798, isoleucine 2799, and aspartate 2842.

The protein in the N-terminal section; belongs to the cation transport ATPase (P-type) (TC 3.A.3) family. Type IV subfamily. This sequence in the C-terminal section; belongs to the adenylyl cyclase class-4/guanylyl cyclase family. Mg(2+) is required as a cofactor. Requires Mn(2+) as cofactor.

The protein localises to the membrane. The catalysed reaction is GTP = 3',5'-cyclic GMP + diphosphate. Catalyzes the synthesis of the second messenger cGMP from GTP. Probably by regulating cGMP production, required for ookinete gliding motility, which is necessary for the ookinete to traverse the midgut epithelium of the mosquito. This Plasmodium berghei (strain Anka) protein is Guanylate cyclase beta.